We begin with the raw amino-acid sequence, 433 residues long: O-methyltransferase aclM (433 aa).

Residues 5-37 (LTDAERTALQTSLEALNRQVEATRNILRSNSQK) are a coiled coil. Residues Asp-277 and 311 to 313 (GDF) contribute to the S-adenosyl-L-methionine site. Catalysis depends on His-330, which acts as the Proton acceptor.

This sequence belongs to the class I-like SAM-binding methyltransferase superfamily. Cation-independent O-methyltransferase family. COMT subfamily.

It functions in the pathway mycotoxin biosynthesis. Functionally, O-methyltransferase; part of the gene cluster that mediates the biosynthesis of aspirochlorine (or antibiotic A30641), an unusual halogenated spiro compound with distinctive antifungal properties due to selective inhibition of protein biosynthesis, and which is also active against bacteria, viruses, and murine tumor cells. The non-ribosomal peptide synthetase (NRPS) aclP is responsible the formation of the diketopiperazine (DKP) core from the condensation of 2 phenylalanine residues. One Phe residue is tailored into chlorotyrosine by hydroxylation and chlorination, whereas the second Phe undergoes an unprecedented C-C bond cleavage to be converted into glycine. After formation of the DKP, sulfur is incorporated into the DKP by conjugation with glutathione by aclG, followed by its stepwise degradation to the thiol by aclI, aclJ and aclK, and the dithiol oxidation by aclT. In addition, oxygenases (aclB, aclC, aclL and aclO) and O-methyltransferases (aclM and aclU) act as tailoring enzymes to produce the intermediate dechloroaspirochlorine. Ultimately, chlorination of dechloroaspirochlorine by the halogenase aclH is the last step in the aspirochlorine pathway. This Aspergillus oryzae (strain ATCC 42149 / RIB 40) (Yellow koji mold) protein is O-methyltransferase aclM.